The primary structure comprises 206 residues: Dual specificity phosphatase 29 (206 aa).

The Tyrosine-protein phosphatase domain maps to 47-194 (HVNQVWPSVY…LRALDITLQE (148 aa)). 138–145 (HCVMGRSR) contacts substrate. The active-site Phosphocysteine intermediate is the Cys139.

Belongs to the protein-tyrosine phosphatase family. Non-receptor class dual specificity subfamily.

Its subcellular location is the cytoplasm. The protein localises to the nucleus. It catalyses the reaction O-phospho-L-tyrosyl-[protein] + H2O = L-tyrosyl-[protein] + phosphate. It carries out the reaction O-phospho-L-seryl-[protein] + H2O = L-seryl-[protein] + phosphate. The catalysed reaction is O-phospho-L-threonyl-[protein] + H2O = L-threonyl-[protein] + phosphate. In terms of biological role, dual specificity phosphatase able to dephosphorylate phosphotyrosine, phosphoserine and phosphothreonine residues within the same substrate, with a preference for phosphotyrosine as a substrate. Involved in the modulation of AMPK and MAPK1/2 signaling pathways. This chain is Dual specificity phosphatase 29 (dusp29), found in Gasterosteus aculeatus (Three-spined stickleback).